A 456-amino-acid polypeptide reads, in one-letter code: MSEKASEERPIRLAVLGGTSTGKTSLVSRLTVNIVHEVHYPTRNQTNWLFGFVPSSILARAILDEQAHERLCLRSPSSQTLEPIFPSPQVSKNVLLSPLVFQASTDNFQSVRLHNKSHSRRSLSLDKSDSPLYQTFSNDINSQSVPKIKADQLNVIEHFKLPLNYIPPTYAPIQIDIIDTPGFSPDNVVPFLEVSLFRNLGKSILHGLADEPRRPVSTTSLLVASGASELNGKVDGYILVYSAVPELNHIGGPPEYGDDVMNTDTENVSDGGFELLKVIRNCILDAWTEFRNYEKRWEEGKEDDIYSLVYSLRHLWSKNSKEKSAKIEQLRSYNTKLKSIELDPSSPDSPPPCIIVCSHVNHELASPMLIEMGRQLATKWKYGFVGIDSMDDLNVDVAVSLLIKEISEKMKLLVSNSNGSSSSGNSSSIYNSHLMNDKKKNNNAGLNKNMLKKIIK.

Positions 415-428 are enriched in low complexity; that stretch reads SNSNGSSSSGNSSS. The disordered stretch occupies residues 415 to 444; sequence SNSNGSSSSGNSSSIYNSHLMNDKKKNNNA.

This is an uncharacterized protein from Saccharomyces cerevisiae (strain ATCC 204508 / S288c) (Baker's yeast).